The following is a 75-amino-acid chain: ATP synthase subunit c (75 aa).

The next 2 membrane-spanning stretches (helical) occupy residues 8–28 and 54–74; these read FIAIGLSVLGILGAGLGVANI and AGMVEFTGLLAFVLAMLLMFV.

It belongs to the ATPase C chain family. F-type ATPases have 2 components, F(1) - the catalytic core - and F(0) - the membrane proton channel. F(1) has five subunits: alpha(3), beta(3), gamma(1), delta(1), epsilon(1). F(0) has three main subunits: a(1), b(2) and c(10-14). The alpha and beta chains form an alternating ring which encloses part of the gamma chain. F(1) is attached to F(0) by a central stalk formed by the gamma and epsilon chains, while a peripheral stalk is formed by the delta and b chains.

The protein localises to the cell membrane. In terms of biological role, f(1)F(0) ATP synthase produces ATP from ADP in the presence of a proton or sodium gradient. F-type ATPases consist of two structural domains, F(1) containing the extramembraneous catalytic core and F(0) containing the membrane proton channel, linked together by a central stalk and a peripheral stalk. During catalysis, ATP synthesis in the catalytic domain of F(1) is coupled via a rotary mechanism of the central stalk subunits to proton translocation. Functionally, key component of the F(0) channel; it plays a direct role in translocation across the membrane. A homomeric c-ring of between 10-14 subunits forms the central stalk rotor element with the F(1) delta and epsilon subunits. The sequence is that of ATP synthase subunit c from Wolbachia sp. subsp. Brugia malayi (strain TRS).